Consider the following 377-residue polypeptide: Alanine racemase (377 aa).

The active-site Proton acceptor; specific for D-alanine is the K39. Residue K39 is modified to N6-(pyridoxal phosphate)lysine. R137 serves as a coordination point for substrate. The active-site Proton acceptor; specific for L-alanine is the Y266. M314 contributes to the substrate binding site.

This sequence belongs to the alanine racemase family. Requires pyridoxal 5'-phosphate as cofactor.

It carries out the reaction L-alanine = D-alanine. Its pathway is amino-acid biosynthesis; D-alanine biosynthesis; D-alanine from L-alanine: step 1/1. Catalyzes the interconversion of L-alanine and D-alanine. May also act on other amino acids. The sequence is that of Alanine racemase (alr) from Symbiobacterium thermophilum (strain DSM 24528 / JCM 14929 / IAM 14863 / T).